Reading from the N-terminus, the 513-residue chain is Maturase K (513 aa).

This sequence belongs to the intron maturase 2 family. MatK subfamily.

The protein localises to the plastid. Its subcellular location is the chloroplast. Usually encoded in the trnK tRNA gene intron. Probably assists in splicing its own and other chloroplast group II introns. This chain is Maturase K, found in Pinus resinosa (Red pine).